Reading from the N-terminus, the 862-residue chain is Taxadiene synthase (862 aa).

Mg(2+) contacts are provided by D613, D617, N757, T761, and E765. Residues 613–617 (DDMAD) carry the DDXXD motif motif.

Belongs to the terpene synthase family. It depends on Mg(2+) as a cofactor.

It catalyses the reaction (2E,6E,10E)-geranylgeranyl diphosphate = taxa-4(5),11(12)-diene + diphosphate. It functions in the pathway alkaloid biosynthesis; taxol biosynthesis; taxa-4(20),11-dien-5alpha-ol from geranylgeranyl diphosphate: step 1/2. In terms of biological role, catalyzes the cyclization of the ubiquitous isoprenoid intermediate geranylgeranyl diphosphate to taxa-4,11-diene, the parent olefin with a taxane skeleton. This Taxus baccata (English yew) protein is Taxadiene synthase (TDC1).